The primary structure comprises 92 residues: MSRSIWKGPFVDGYLLKKADAARASGRNETIKIWSRRSTILPQFVGLTFGVYNGAKHVPVYVSEDMVGHKFGEFSPTRTYYGHAADKKSKRR.

The protein belongs to the universal ribosomal protein uS19 family.

Functionally, protein S19 forms a complex with S13 that binds strongly to the 16S ribosomal RNA. This Azorhizobium caulinodans (strain ATCC 43989 / DSM 5975 / JCM 20966 / LMG 6465 / NBRC 14845 / NCIMB 13405 / ORS 571) protein is Small ribosomal subunit protein uS19.